Here is a 701-residue protein sequence, read N- to C-terminus: C6 finger domain transcription factor nscR (701 aa).

Residues 17–43 constitute a DNA-binding region (zn(2)-C6 fungal-type); that stretch reads CELCRERKVKCDKLDPCTNCSSAGVIC.

The protein localises to the nucleus. Transcription factor that specifically regulates the neosartoricin B biosynthesis gene cluster. The protein is C6 finger domain transcription factor nscR of Arthroderma benhamiae (strain ATCC MYA-4681 / CBS 112371) (Trichophyton mentagrophytes).